Reading from the N-terminus, the 315-residue chain is C1GALT1-specific chaperone 1-like protein (315 aa).

At 1–8 the chain is on the cytoplasmic side; that stretch reads MVSASGTS. Residues 9–29 form a helical; Signal-anchor for type II membrane protein membrane-spanning segment; sequence FFKGMLLGSISWVLITMFGQI. Topologically, residues 30 to 315 are lumenal; that stretch reads HIRHRGQTQD…FLPPVGSEND (286 aa). 2 N-linked (GlcNAc...) asparagine glycosylation sites follow: Asn-55 and Asn-301.

This sequence belongs to the glycosyltransferase 31 family. Beta3-Gal-T subfamily.

It is found in the membrane. The sequence is that of C1GALT1-specific chaperone 1-like protein from Homo sapiens (Human).